Reading from the N-terminus, the 334-residue chain is S-adenosylmethionine:tRNA ribosyltransferase-isomerase (334 aa).

It belongs to the QueA family. Monomer.

The protein localises to the cytoplasm. The catalysed reaction is 7-aminomethyl-7-carbaguanosine(34) in tRNA + S-adenosyl-L-methionine = epoxyqueuosine(34) in tRNA + adenine + L-methionine + 2 H(+). It functions in the pathway tRNA modification; tRNA-queuosine biosynthesis. Transfers and isomerizes the ribose moiety from AdoMet to the 7-aminomethyl group of 7-deazaguanine (preQ1-tRNA) to give epoxyqueuosine (oQ-tRNA). This is S-adenosylmethionine:tRNA ribosyltransferase-isomerase from Rubrobacter xylanophilus (strain DSM 9941 / JCM 11954 / NBRC 16129 / PRD-1).